The sequence spans 466 residues: Glutamate--tRNA ligase 1 (466 aa).

A 'HIGH' region motif is present at residues 9 to 19 (PSPTGLLHIGN). Positions 238-242 (KLSKR) match the 'KMSKS' region motif. Lys241 provides a ligand contact to ATP.

This sequence belongs to the class-I aminoacyl-tRNA synthetase family. Glutamate--tRNA ligase type 1 subfamily. As to quaternary structure, monomer.

The protein resides in the cytoplasm. The catalysed reaction is tRNA(Glu) + L-glutamate + ATP = L-glutamyl-tRNA(Glu) + AMP + diphosphate. Its function is as follows. Catalyzes the attachment of glutamate to tRNA(Glu) in a two-step reaction: glutamate is first activated by ATP to form Glu-AMP and then transferred to the acceptor end of tRNA(Glu). In Gluconacetobacter diazotrophicus (strain ATCC 49037 / DSM 5601 / CCUG 37298 / CIP 103539 / LMG 7603 / PAl5), this protein is Glutamate--tRNA ligase 1.